A 343-amino-acid chain; its full sequence is MARAPGGVRRRSGRRGAGGGGAGGGGEALRKGPWMAEEDEVLLEHVRTHGPMDWSSIRSKGLLPRTGKSCRLRWVNKLRPNLKSGCKFTAEEERVVIELQAQFGNKWARIATYLQGRTDNDVKNFWSTRQKRLARLLRGPLPAARPNKHNSGKGKAPSSSSLDSQTATFHQSSASLDQASLEGNSLGWQCREAAPFMGYDQACSGFFAFEGPLPLQLLPPADGEASSSNAAQSAPPPLLFDQPPYPLINFPGWPERYVDVGHGFVDAGAMDGLAYQELLPMVQSVPMIMPFFGMECAHDAVKHGAFDDLPPNMFDDAVDQPPPPPPPPPPPSPSPSPSRDDVL.

Residues 1 to 30 are disordered; that stretch reads MARAPGGVRRRSGRRGAGGGGAGGGGEALR. Over residues 15–27 the composition is skewed to gly residues; it reads RGAGGGGAGGGGE. 2 HTH myb-type domains span residues 26–78 and 79–134; these read GEAL…VNKL and RPNL…KRLA. 2 consecutive DNA-binding regions (H-T-H motif) follow at residues 54 to 77 and 107 to 130; these read WSSIRSKGLLPRTGKSCRLRWVNK and WARIATYLQGRTDNDVKNFWSTRQ. 3 disordered regions span residues 137–169, 219–238, and 307–343; these read LRGPLPAARPNKHNSGKGKAPSSSSLDSQTATF, PPADGEASSSNAAQSAPPPL, and DDLPPNMFDDAVDQPPPPPPPPPPPSPSPSPSRDDVL. Residues 157-169 show a composition bias toward polar residues; the sequence is PSSSSLDSQTATF. A compositionally biased stretch (pro residues) spans 320-336; that stretch reads QPPPPPPPPPPPSPSPS.

Its subcellular location is the nucleus. Its function is as follows. Probable transcription factor. The chain is Probable transcription factor MYB58 from Oryza sativa subsp. japonica (Rice).